Here is a 93-residue protein sequence, read N- to C-terminus: CRISPR-associated endoribonuclease Cas2 (93 aa).

D13 provides a ligand contact to Mg(2+).

It belongs to the CRISPR-associated endoribonuclease Cas2 protein family. Homodimer, forms a heterotetramer with a Cas1 homodimer. Requires Mg(2+) as cofactor.

CRISPR (clustered regularly interspaced short palindromic repeat), is an adaptive immune system that provides protection against mobile genetic elements (viruses, transposable elements and conjugative plasmids). CRISPR clusters contain sequences complementary to antecedent mobile elements and target invading nucleic acids. CRISPR clusters are transcribed and processed into CRISPR RNA (crRNA). Functions as a ssRNA-specific endoribonuclease. Involved in the integration of spacer DNA into the CRISPR cassette. This is CRISPR-associated endoribonuclease Cas2 from Korarchaeum cryptofilum (strain OPF8).